Here is a 208-residue protein sequence, read N- to C-terminus: UPF0637 protein BCG9842_B1177 (208 aa).

It belongs to the UPF0637 family.

The chain is UPF0637 protein BCG9842_B1177 from Bacillus cereus (strain G9842).